The chain runs to 548 residues: C2H2-type transcription factor MSN2 (548 aa).

2 C2H2-type zinc fingers span residues 420–448 and 449–471; these read FKCE…QDKP and FECN…ARTH.

As to quaternary structure, interacts with HOG1/OSM1.

It localises to the nucleus. It is found in the cytoplasm. Transcription factor that acts as a key downstream transcription factor in the HOG1-MAPK pathway. Regulates the expression of a series of downstream genes and controls vegetative growth, conidiogenesis, cell wall integrity, stress response, mitochondrial morphology, and pathogenicity. Binds to a putative promoter region 1500 bp upstream of the start codons of the target genes MGG_07019, POX1 and DCI1. Binds to the AGGGG and CCCCT motif of the COS1 promoter region. Involved in fatty acid beta-oxidation by directly regulating the expression of the dienoyl-CoA isomerase DCI1, thereby facilitating invasive hyphal growth during the early infection stage. Targets also the 3-methylglutaconyl-CoA hydratase-encoding gene (AUH1) to control mitochondrial morphology and mitophagy, which are critical for the infectious growth of the pathogen. The chain is C2H2-type transcription factor MSN2 from Pyricularia oryzae (strain 70-15 / ATCC MYA-4617 / FGSC 8958) (Rice blast fungus).